A 522-amino-acid polypeptide reads, in one-letter code: Biotin-dependent long chain acyl-coenzyme A carboxylase beta4 subunit (522 aa).

The CoA carboxyltransferase N-terminal domain occupies 11-261; it reads TAEKLAELRE…NCFDKPPVVN (251 aa). In terms of domain architecture, CoA carboxyltransferase C-terminal spans 270–503; the sequence is GHDLELDSIV…RLLLRKSMHL (234 aa).

Belongs to the AccD/PCCB family. In terms of assembly, the biotin-dependent long-chain acyl-CoA carboxylase (LCC) complex is composed of AccA3, which contains the biotin carboxylase (BC) and biotin carboxyl carrier protein (BCCP) domains, and AccD4, which contains the carboxyl transferase (CT) domain. The complex also contains the beta5 subunit AccD5 and the epsilon subunit AccE5. The four subunits are essential for activity, but AccD5, together with AccE5, probably plays a structural role rather than a catalytic one.

Functionally, component of a biotin-dependent acyl-CoA carboxylase complex. This subunit transfers the CO2 from carboxybiotin to the CoA ester substrate. When associated with the alpha3 subunit AccA3, the beta5 subunit AccD5 and the epsilon subunit AccE5, forms the LCC complex, which is involved in the carboxylation of long chain acyl-CoA. The LCC complex can use C16-C24 substrates, the highest specific activity is obtained with carboxy-C20-CoA. Has low activity with acetyl-CoA and propionyl-CoA. The protein is Biotin-dependent long chain acyl-coenzyme A carboxylase beta4 subunit of Mycobacterium tuberculosis (strain ATCC 25618 / H37Rv).